Here is a 455-residue protein sequence, read N- to C-terminus: Ribulose bisphosphate carboxylase large chain (455 aa).

K5 carries the post-translational modification N6,N6,N6-trimethyllysine. Substrate is bound by residues N114 and T164. K166 (proton acceptor) is an active-site residue. K168 is a substrate binding site. Residues K192, D194, and E195 each coordinate Mg(2+). K192 carries the post-translational modification N6-carboxylysine. Residue H285 is the Proton acceptor of the active site. The substrate site is built by R286, H318, and S370.

It belongs to the RuBisCO large chain family. Type I subfamily. As to quaternary structure, heterohexadecamer of 8 large chains and 8 small chains; disulfide-linked. The disulfide link is formed within the large subunit homodimers. Mg(2+) is required as a cofactor. In terms of processing, the disulfide bond which can form in the large chain dimeric partners within the hexadecamer appears to be associated with oxidative stress and protein turnover.

Its subcellular location is the plastid. It is found in the chloroplast. It carries out the reaction 2 (2R)-3-phosphoglycerate + 2 H(+) = D-ribulose 1,5-bisphosphate + CO2 + H2O. It catalyses the reaction D-ribulose 1,5-bisphosphate + O2 = 2-phosphoglycolate + (2R)-3-phosphoglycerate + 2 H(+). In terms of biological role, ruBisCO catalyzes two reactions: the carboxylation of D-ribulose 1,5-bisphosphate, the primary event in carbon dioxide fixation, as well as the oxidative fragmentation of the pentose substrate in the photorespiration process. Both reactions occur simultaneously and in competition at the same active site. The chain is Ribulose bisphosphate carboxylase large chain from Brownea coccinea (Rose of Venezuela).